The following is a 152-amino-acid chain: Orientotoxin-1 (152 aa).

Expressed by the venom gland.

The protein localises to the secreted. The enzyme catalyses a 1-acyl-sn-glycero-3-phosphocholine + H2O = sn-glycerol 3-phosphocholine + a fatty acid + H(+). Its function is as follows. Neurotoxin of presynaptic effect which degrades lysophospholipids. The sequence is that of Orientotoxin-1 from Vespa orientalis (Oriental hornet).